Reading from the N-terminus, the 261-residue chain is Putative phosphite transport system permease protein HtxE (261 aa).

In terms of domain architecture, ABC transmembrane type-1 spans 47-253 (EATTETVEVL…VFVFVLDQLQ (207 aa)). Transmembrane regions (helical) follow at residues 122–142 (LIVA…GVLA), 203–220 (RNLR…GGIG), and 229–249 (MFQY…VFVL).

This sequence belongs to the binding-protein-dependent transport system permease family.

It is found in the cell inner membrane. Probably forms part of a binding-protein-dependent hypophosphite transporter. The chain is Putative phosphite transport system permease protein HtxE (htxE) from Stutzerimonas stutzeri (Pseudomonas stutzeri).